A 310-amino-acid polypeptide reads, in one-letter code: Mitochondrial citrate transporter F (310 aa).

Solcar repeat units follow at residues 23-108, 115-207, and 216-303; these read KKVH…LKNH, PPGL…FKRL, and DNMG…HKKL. 6 consecutive transmembrane segments (helical) span residues 29-49, 85-105, 122-142, 186-206, 222-242, and 275-296; these read FWFGGSASCFAAAVTHPLDLV, SAAILRQLTYSTTRFGIYEEL, IGMASASGFIGGMAGNPADVL, NSTRAVLMTTSQLASYDTFKR, FTASFMAGFVATTVCSPVDVI, and AFRGWVPSFIRLGPHTIATFIF.

The protein belongs to the mitochondrial carrier (TC 2.A.29) family.

It localises to the mitochondrion inner membrane. Functionally, mitochondrial transporter that does not mediate citrate export from mitochondria to cytoplasm. Its exact function has still to be determined. The sequence is that of Mitochondrial citrate transporter F from Aspergillus niger (strain ATCC 1015 / CBS 113.46 / FGSC A1144 / LSHB Ac4 / NCTC 3858a / NRRL 328 / USDA 3528.7).